A 348-amino-acid polypeptide reads, in one-letter code: Ion-translocating oxidoreductase complex subunit D (348 aa).

The next 3 membrane-spanning stretches (helical) occupy residues Val20–Phe39, Tyr67–Val87, and Ala124–Ala144. Thr187 is subject to FMN phosphoryl threonine. The next 4 helical transmembrane spans lie at Trp221–Trp241, Pro244–Ala264, Phe266–Ile286, and Leu300–Pro320.

It belongs to the NqrB/RnfD family. The complex is composed of six subunits: RnfA, RnfB, RnfC, RnfD, RnfE and RnfG. It depends on FMN as a cofactor.

Its subcellular location is the cell inner membrane. Functionally, part of a membrane-bound complex that couples electron transfer with translocation of ions across the membrane. This is Ion-translocating oxidoreductase complex subunit D from Tolumonas auensis (strain DSM 9187 / NBRC 110442 / TA 4).